The sequence spans 246 residues: Probable transcriptional regulatory protein ESA_01378 (246 aa).

The protein belongs to the TACO1 family.

Its subcellular location is the cytoplasm. The chain is Probable transcriptional regulatory protein ESA_01378 from Cronobacter sakazakii (strain ATCC BAA-894) (Enterobacter sakazakii).